The sequence spans 750 residues: Olfactomedin-like protein 2B (750 aa).

The first 22 residues, 1-22 (MAKPRLLVLYFALIVVPAWVSS), serve as a signal peptide directing secretion. 2 coiled-coil regions span residues 40–68 (AEDE…KVKA) and 179–213 (KLEE…GKEN). 2 N-linked (GlcNAc...) asparagine glycosylation sites follow: N187 and N213. Disordered stretches follow at residues 346 to 437 (TRRP…PPAV) and 452 to 484 (VPPT…PEEE). 2 stretches are compositionally biased toward polar residues: residues 354–384 (QGHS…SDPS) and 393–413 (PTLQ…LQPS). Residues 416–430 (VPATTVAHTATQQPA) are compositionally biased toward low complexity. The region spanning 493–750 (RCKDTLSTIT…QVTYHVIFAY (258 aa)) is the Olfactomedin-like domain. The cysteines at positions 494 and 680 are disulfide-linked. A glycan (N-linked (GlcNAc...) asparagine) is linked at N695.

Homodimer. Binds to heparin and chondroitin sulfate E. O-glycosylated and N-glycosylated.

Its subcellular location is the secreted. This Homo sapiens (Human) protein is Olfactomedin-like protein 2B (OLFML2B).